Consider the following 436-residue polypeptide: Bystin (436 aa).

The disordered stretch occupies residues 1-105 (MPKLKVTRGA…GSDEEDEEWP (105 aa)). Residue S54 is modified to Phosphoserine. Basic and acidic residues predominate over residues 70–86 (TEHATGDRPAKPRERAT). Acidic residues predominate over residues 96-105 (GSDEEDEEWP). At S97 the chain carries Phosphoserine. T155 is modified (phosphothreonine). 2 positions are modified to phosphoserine: S166 and S413.

This sequence belongs to the bystin family. As to quaternary structure, binds trophinin, tastin and cytokeratins.

It is found in the cytoplasm. It localises to the nucleus. The protein localises to the nucleolus. Its function is as follows. Required for processing of 20S pre-rRNA precursor and biogenesis of 40S ribosomal subunits. The polypeptide is Bystin (Rattus norvegicus (Rat)).